The primary structure comprises 404 residues: Formate-dependent phosphoribosylglycinamide formyltransferase (404 aa).

N(1)-(5-phospho-beta-D-ribosyl)glycinamide contacts are provided by residues 25–26 and Glu-85; that span reads EL. ATP-binding positions include Arg-118, Lys-159, 164 to 169, 199 to 202, and Glu-207; these read SSGKGQ and EGFV. Residues 123 to 318 form the ATP-grasp domain; the sequence is RLAAEELGLP…EFELHARAIL (196 aa). Glu-277 and Glu-289 together coordinate Mg(2+). N(1)-(5-phospho-beta-D-ribosyl)glycinamide contacts are provided by residues Asp-296, Lys-365, and 372-373; that span reads RR.

The protein belongs to the PurK/PurT family. In terms of assembly, homodimer.

The enzyme catalyses N(1)-(5-phospho-beta-D-ribosyl)glycinamide + formate + ATP = N(2)-formyl-N(1)-(5-phospho-beta-D-ribosyl)glycinamide + ADP + phosphate + H(+). It participates in purine metabolism; IMP biosynthesis via de novo pathway; N(2)-formyl-N(1)-(5-phospho-D-ribosyl)glycinamide from N(1)-(5-phospho-D-ribosyl)glycinamide (formate route): step 1/1. Involved in the de novo purine biosynthesis. Catalyzes the transfer of formate to 5-phospho-ribosyl-glycinamide (GAR), producing 5-phospho-ribosyl-N-formylglycinamide (FGAR). Formate is provided by PurU via hydrolysis of 10-formyl-tetrahydrofolate. In Burkholderia thailandensis (strain ATCC 700388 / DSM 13276 / CCUG 48851 / CIP 106301 / E264), this protein is Formate-dependent phosphoribosylglycinamide formyltransferase.